A 558-amino-acid chain; its full sequence is MGPPKNFKHFSKSNKHKKEQKALITQEDFYLAAIDCEEQADRWLLSDIKKCLRFYLKALEHYENGLTALDSTQEGKYNIYYNETRLFLQIYTDYLANNGYINILQYVKMDDMPDLSNLVLSLPQIIQRFEIVYETFPEQRTWDLQFNLLTCYLTLIESLDDTVSPTVAMEGADILTLTNKYIEIFQHLVNYLLQELQNWSENAEQDSDDTDTELQRDTLDEDAMQVTRDGSGIRTNGPVQPPAEVMDVSEQVTPSSLTEVLANSLKFNHALMELVIESKISIEKNVETKILNPIQINFLEDTTNKFYLQLRDIIDSISAAIPLDLKEIGLAKTLIEGLNIISSGTFESLQDFVLQTVSFTDLLDEKDVQGKIDLSLIRVDIVEFAILCLNDYSSDASWKLSGLLTKVLTEARTLLTDYRNQILFLKNQTLNEQLSHVVFQLCDVLVNSSDNELRRYAIKESTEKSQKTPGGAHTLNILMKNANVFLNNAVAISSKQCGLQETIIDKLKRNYIHNQAKERLLFLQRLEQKSNEDDGTSASPTAMTFDMPPEHPFYSHYR.

Positions 531–558 are disordered; that stretch reads NEDDGTSASPTAMTFDMPPEHPFYSHYR.

This is an uncharacterized protein from Saccharomyces cerevisiae (strain ATCC 204508 / S288c) (Baker's yeast).